The primary structure comprises 181 residues: Peptidyl-tRNA hydrolase (181 aa).

Y14 is a tRNA binding site. H19 acts as the Proton acceptor in catalysis. The tRNA site is built by Y62, N64, and N108.

It belongs to the PTH family. In terms of assembly, monomer.

The protein resides in the cytoplasm. It catalyses the reaction an N-acyl-L-alpha-aminoacyl-tRNA + H2O = an N-acyl-L-amino acid + a tRNA + H(+). In terms of biological role, hydrolyzes ribosome-free peptidyl-tRNAs (with 1 or more amino acids incorporated), which drop off the ribosome during protein synthesis, or as a result of ribosome stalling. Its function is as follows. Catalyzes the release of premature peptidyl moieties from peptidyl-tRNA molecules trapped in stalled 50S ribosomal subunits, and thus maintains levels of free tRNAs and 50S ribosomes. The polypeptide is Peptidyl-tRNA hydrolase (Campylobacter jejuni subsp. jejuni serotype O:23/36 (strain 81-176)).